Consider the following 455-residue polypeptide: T-box protein VegT (455 aa).

Residues 57-230 (LWAQFHQEGT…HNPFAKGFRE (174 aa)) constitute a DNA-binding region (T-box). The span at 229 to 241 (REQERSHKRDDVL) shows a compositional bias: basic and acidic residues. 2 disordered regions span residues 229–276 (REQE…RVKE) and 295–360 (ANQG…PDSD). Over residues 308-326 (GANQEQQVPSSSSNFYNRN) the composition is skewed to polar residues.

As to quaternary structure, forms a repression complex on the promoters of the nodal/nr1 and siamois genes with the maternal factors tcf7l1/tcf3 and pouf5.1/oct-25. Interacts (via C-terminus) with tcf7l1/tcf3 (via N-terminus). Also interacts with the other POU-domain transcription factors pou5f1.2/oct-91 and pou5f1.3/oct-60. In terms of tissue distribution, vegetally localized in oocytes and expressed in the presumptive endoderm and mesoderm at early gastrula stage. Expression is down-regulated in the endoderm by the end of gastrulation but maintained in the lateral and ventral mesoderm of the blastopore lip.

It is found in the nucleus. In terms of biological role, transcription factor required for both mesoderm and endoderm formation in the embryo; signaling determinants and concentration levels may determine which germ layer is formed. Acts together with beta-catenin to activate genes that are responsible for mesoderm induction including wnt-8, eomes t/bra, siamois, mix1 and sox17. Directly binds to promoter DNA. Patterns the mesoderm along the dorsoventral and posterior axis. Activates siamois gene transcription when alone or in combination with beta-catenin, but inhibits siamois transcription in combination with pou5f1.1/oct-25. This chain is T-box protein VegT, found in Xenopus tropicalis (Western clawed frog).